Consider the following 376-residue polypeptide: MYG1 exonuclease (376 aa).

Residues Met-1 to Ile-47 constitute a mitochondrion transit peptide. Ser-120 carries the post-translational modification Phosphoserine. Lys-267 and Lys-273 each carry N6-acetyllysine.

This sequence belongs to the MYG1 family. In terms of tissue distribution, ubiquitously expressed, with highest levels in testis.

It is found in the nucleus. It localises to the nucleoplasm. The protein localises to the mitochondrion matrix. The protein resides in the nucleolus. Functionally, 3'-5' RNA exonuclease which cleaves in situ on specific transcripts in both nucleus and mitochondrion. Involved in regulating spatially segregated organellar RNA processing, acts as a coordinator of nucleo-mitochondrial crosstalk. In nucleolus, processes pre-ribosomal RNA involved in ribosome assembly and alters cytoplasmic translation. In mitochondrial matrix, processes 3'-termini of the mito-ribosomal and messenger RNAs and controls translation of mitochondrial proteins. The sequence is that of MYG1 exonuclease from Homo sapiens (Human).